The sequence spans 1726 residues: Protein Shroom2 (1726 aa).

In terms of domain architecture, PDZ spans 79–159 (AGGCYSYWRG…ILKMIVKRRN (81 aa)). 4 disordered regions span residues 294–373 (DNTK…RSDS), 425–451 (RTVA…LSPY), 657–676 (FSQL…DYSW), and 697–785 (EGRN…STYR). Residues 318–328 (VLQSTSINETS) show a composition bias toward polar residues. Residues 329-338 (KIQRTEDNTE) show a composition bias toward basic and acidic residues. Residues 657-667 (FSQLDHSEKGS) are compositionally biased toward basic and acidic residues. 2 stretches are compositionally biased toward polar residues: residues 746 to 755 (SKSTAALTES) and 769 to 785 (LESM…STYR). In terms of domain architecture, ASD1 spans 788–877 (LQEAQARVLR…SEPEKINEVG (90 aa)). 6 disordered regions span residues 913–968 (PKVP…DKVT), 1007–1080 (LDAD…QCGA), 1092–1120 (KWKP…GTLP), 1166–1240 (FKKR…KNPS), 1269–1299 (SSKS…DKPP), and 1471–1499 (AQQR…VPSA). Residues 917–926 (PKVVSSSQSE) are compositionally biased toward low complexity. The segment covering 936 to 948 (DYAKSSEGQESKR) has biased composition (basic and acidic residues). 2 stretches are compositionally biased toward polar residues: residues 1054–1070 (NSNS…SPTR) and 1104–1119 (ETSN…SGTL). Positions 1191–1205 (SSSSLATSSESLLTA) are enriched in low complexity. Polar residues predominate over residues 1209–1235 (RAQSYSPSSQDTFPPQSLQKQSPSTYP). An ASD2 domain is found at 1427–1721 (EELVREIVDK…QLKCLTDSLP (295 aa)).

It belongs to the shroom family. As to quaternary structure, interacts with F-actin.

The protein localises to the apical cell membrane. Its subcellular location is the cell junction. The protein resides in the tight junction. It is found in the cytoplasm. It localises to the cytoskeleton. Functionally, may be involved in endothelial cell morphology changes during cell spreading. Required for eye pigmentation. In the retinal pigment epithelium, regulates the biogenesis of melanosomes and promotes their association with the apical cell surface by inducing gamma-tubulin redistribution. This is Protein Shroom2 (shroom2) from Xenopus tropicalis (Western clawed frog).